The primary structure comprises 520 residues: Cholesterol side-chain cleavage enzyme, mitochondrial (520 aa).

Residues 1-39 (MLARGLPLRSALVKACPPLLNTGREGWGHHRVGTGEGAG) constitute a mitochondrion transit peptide. Residues 27 to 48 (WGHHRVGTGEGAGISTRTPRPY) are disordered. Cys461 serves as a coordination point for heme.

Belongs to the cytochrome P450 family. As to quaternary structure, interacts with FDX1/adrenodoxin. The cofactor is heme.

The protein resides in the mitochondrion inner membrane. The catalysed reaction is 6 reduced [adrenodoxin] + cholesterol + 3 O2 + 6 H(+) = 4-methylpentanal + pregnenolone + 6 oxidized [adrenodoxin] + 4 H2O. It catalyses the reaction 2 reduced [adrenodoxin] + cholesterol + O2 + 2 H(+) = (22R)-hydroxycholesterol + 2 oxidized [adrenodoxin] + H2O. It carries out the reaction (22R)-hydroxycholesterol + 2 reduced [adrenodoxin] + O2 + 2 H(+) = (20R,22R)-20,22-dihydroxycholesterol + 2 oxidized [adrenodoxin] + H2O. The enzyme catalyses (20R,22R)-20,22-dihydroxycholesterol + 2 reduced [adrenodoxin] + O2 + 2 H(+) = 4-methylpentanal + pregnenolone + 2 oxidized [adrenodoxin] + 2 H2O. It functions in the pathway lipid metabolism; C21-steroid hormone metabolism. The protein operates within steroid metabolism; cholesterol metabolism. Functionally, a cytochrome P450 monooxygenase that catalyzes the side-chain hydroxylation and cleavage of cholesterol to pregnenolone, the precursor of most steroid hormones. Catalyzes three sequential oxidation reactions of cholesterol, namely the hydroxylation at C22 followed with the hydroxylation at C20 to yield 20R,22R-hydroxycholesterol that is further cleaved between C20 and C22 to yield the C21-steroid pregnenolone and 4-methylpentanal. Mechanistically, uses molecular oxygen inserting one oxygen atom into a substrate and reducing the second into a water molecule. Two electrons are provided by NADPH via a two-protein mitochondrial transfer system comprising flavoprotein FDXR (adrenodoxin/ferredoxin reductase) and nonheme iron-sulfur protein FDX1 or FDX2 (adrenodoxin/ferredoxin). The sequence is that of Cholesterol side-chain cleavage enzyme, mitochondrial from Capra hircus (Goat).